The chain runs to 557 residues: Organic cation/carnitine transporter 2 (557 aa).

The Cytoplasmic portion of the chain corresponds to 1–20 (MRDYDEVTAFLGEWGPFQRL). The chain crosses the membrane as a helical span at residues 21–41 (IFFLLSASIIPNGFTGLSSVF). The Extracellular segment spans residues 42–142 (LIATPEHRCR…NLVCEDDWKA (101 aa)). 3 N-linked (GlcNAc...) asparagine glycosylation sites follow: asparagine 57, asparagine 64, and asparagine 91. The helical transmembrane segment at 143 to 163 (PLTISLFFVGVLLGSFISGQL) threads the bilayer. The Cytoplasmic portion of the chain corresponds to 164 to 172 (SDRFGRKNV). The chain crosses the membrane as a helical span at residues 173 to 193 (LFVTMGMQTGFSFLQIFSKNF). The Extracellular portion of the chain corresponds to 194–197 (EMFV). A helical membrane pass occupies residues 198–218 (VLFVLVGMGQISNYVAAFVLG). ATP is bound at residue 218 to 225 (GTEILGKS). The Cytoplasmic portion of the chain corresponds to 219–232 (TEILGKSVRIIFST). Residues 233–253 (LGVCIFYAFGYMVLPLFAYFI) form a helical membrane-spanning segment. Residues 254-257 (RDWR) lie on the Extracellular side of the membrane. The chain crosses the membrane as a helical span at residues 258–278 (MLLVALTMPGVLCVALWWFIP). Residues 279 to 341 (ESPRWLISQG…LDLLRTWNIR (63 aa)) are Cytoplasmic-facing. A helical transmembrane segment spans residues 342–362 (MVTIMSIMLWMTISVGYFGLS). At 363–373 (LDTPNLHGDIF) the chain is on the extracellular side. A helical transmembrane segment spans residues 374–394 (VNCFLSAMVEVPAYVLAWLLL). Topologically, residues 395–406 (QYLPRRYSMATA) are cytoplasmic. Residues 407 to 427 (LFLGGSVLLFMQLVPPDLYYL) form a helical membrane-spanning segment. At 428–430 (ATV) the chain is on the extracellular side. Residues 431–451 (LVMVGKFGVTAAFSMVYVYTA) form a helical membrane-spanning segment. At 452 to 462 (ELYPTVVRNMG) the chain is on the cytoplasmic side. The helical transmembrane segment at 463-483 (VGVSSTASRLGSILSPYFVYL) threads the bilayer. Residues 484–488 (GAYDR) are Extracellular-facing. Residue tyrosine 486 is modified to Phosphotyrosine. The chain crosses the membrane as a helical span at residues 489-509 (FLPYILMGSLTILTAILTLFL). Positions 535–557 (TPSHTRMLKDGQERPTILKSTAF) are disordered. Threonine 550 is modified (phosphothreonine).

It belongs to the major facilitator (TC 2.A.1) superfamily. Organic cation transporter (TC 2.A.1.19) family. In terms of assembly, interacts with PDZK1. In terms of processing, glycosylated. Glycosylation affects the expression levels. Not glycosylated. In terms of tissue distribution, strongly expressed in kidney, skeletal muscle, heart and placenta. Primarily expressed by surface epithelial cells of the colon (at protein level). Expressed in CD68 macrophage and CD43 T-cells but not in CD20 B-cells. In testis, localized to Sertoli cell basal membranes, peritubular myoid cells and Leydig cells.

Its subcellular location is the cell membrane. It localises to the apical cell membrane. The protein resides in the basal cell membrane. The protein localises to the endoplasmic reticulum. It carries out the reaction (R)-carnitine(out) + Na(+)(out) = (R)-carnitine(in) + Na(+)(in). It catalyses the reaction glycine betaine(out) + Na(+)(out) = glycine betaine(in) + Na(+)(in). The enzyme catalyses glycine betaine(out) + (R)-carnitine(in) = glycine betaine(in) + (R)-carnitine(out). The catalysed reaction is O-butanoyl-(R)-carnitine(out) + Na(+)(out) = O-butanoyl-(R)-carnitine(in) + Na(+)(in). It carries out the reaction O-acetyl-(R)-carnitine(out) + Na(+)(out) = O-acetyl-(R)-carnitine(in) + Na(+)(in). It catalyses the reaction O-propanoyl-(R)-carnitine(out) + Na(+)(out) = O-propanoyl-(R)-carnitine(in) + Na(+)(in). The enzyme catalyses (S)-carnitine(out) + Na(+)(out) = (S)-carnitine(in) + Na(+)(in). The catalysed reaction is an O-acyl-(R)-carnitine(out) + Na(+)(out) = an O-acyl-(R)-carnitine(in) + Na(+)(in). It carries out the reaction L-glutamyl-L-arginyl-glycyl-L-methionyl-L-threonine(out) + Na(+)(out) = L-glutamyl-L-arginyl-glycyl-L-methionyl-L-threonine(in) + Na(+)(in). It catalyses the reaction N,N-dimethylglycine(out) + Na(+)(out) = N,N-dimethylglycine(in) + Na(+)(in). With respect to regulation, inhibited by emetine, quinidine and verapamil. The IC(50) of emetine is 4.2 uM. Not inhibited by valproic acid. Transport of (R)-carnitine is stimulated by cholesterol in the plasma membrane. In terms of biological role, sodium-ion dependent, high affinity carnitine transporter. Involved in the active cellular uptake of carnitine. Transports one sodium ion with one molecule of carnitine. Also transports organic cations such as tetraethylammonium (TEA) without the involvement of sodium. Relative uptake activity ratio of carnitine to TEA is 11.3. In intestinal epithelia, transports the quorum-sensing pentapeptide CSF (competence and sporulation factor) from B.subtilis which induces cytoprotective heat shock proteins contributing to intestinal homeostasis. May also contribute to regulate the transport of organic compounds in testis across the blood-testis-barrier. Functionally, retained in the ER, unable to perform carnitine uptake. The sequence is that of Organic cation/carnitine transporter 2 from Homo sapiens (Human).